We begin with the raw amino-acid sequence, 958 residues long: Probable transport protein MmpL1 (958 aa).

12 consecutive transmembrane segments (helical) span residues 19 to 39, 192 to 212, 216 to 236, 252 to 272, 295 to 315, 329 to 349, 377 to 397, 762 to 782, 791 to 811, 814 to 834, 868 to 888, and 906 to 927; these read ALSL…NVVA, SLHT…FIAY, SAAL…RGII, VNVL…FLVG, TAHV…CLGF, AIGL…IIAV, WPGP…LALP, YDVM…MLGI, VIVG…VLIW, ILHM…MLAV, VVTI…ASDL, and TLVV…WFWW.

This sequence belongs to the resistance-nodulation-cell division (RND) (TC 2.A.6) family. MmpL subfamily.

It is found in the cell membrane. The sequence is that of Probable transport protein MmpL1 (mmpL1) from Mycobacterium tuberculosis (strain CDC 1551 / Oshkosh).